The sequence spans 419 residues: LWamide neuropeptides (419 aa).

The N-terminal stretch at 1–27 (MEKEMRNLMLLVLLTVILDNGIGKCNA) is a signal peptide. The segment at 27–48 (AKSEEDQDGNARNNRIDKNDDN) is disordered. Residues 28–104 (KSEEDQDGNA…ENLDIDSTVQ (77 aa)) constitute a propeptide that is removed on maturation. Tryptophan 110 is subject to Tryptophan amide. Positions 113-140 (EADFDNTRAHDSAQISDEKQSGLWVGDA) are excised as a propeptide. Positions 120 to 132 (RAHDSAQISDEKQ) are enriched in basic and acidic residues. The tract at residues 120 to 332 (RAHDSAQISD…PGLWGRQVED (213 aa)) is disordered. Residue tryptophan 146 is modified to Tryptophan amide. The propeptide occupies 149-150 (DA). The residue at position 156 (tryptophan 156) is a Tryptophan amide. Residues 159–160 (DA) constitute a propeptide that is removed on maturation. Tryptophan 166 bears the Tryptophan amide mark. Residues 169–170 (DA) constitute a propeptide that is removed on maturation. Tryptophan 176 carries the tryptophan amide modification. Positions 179–180 (DA) are excised as a propeptide. Tryptophan amide is present on tryptophan 186. A propeptide spanning residues 189–190 (DA) is cleaved from the precursor. The residue at position 196 (tryptophan 196) is a Tryptophan amide. The propeptide occupies 199-200 (DA). Tryptophan 206 is subject to Tryptophan amide. Residues 209-210 (DA) constitute a propeptide that is removed on maturation. At tryptophan 216 the chain carries Tryptophan amide. The propeptide at 218 to 220 (GDA) is seems to have a sequencing error or a mutation in position 218; Gly instead of Arg. Tryptophan amide is present on tryptophan 226. Positions 229–230 (DA) are excised as a propeptide. Tryptophan 236 is modified (tryptophan amide). Positions 239-240 (DA) are excised as a propeptide. Tryptophan 246 carries the post-translational modification Tryptophan amide. The propeptide occupies 249-250 (DA). Position 256 is a tryptophan amide (tryptophan 256). A propeptide spanning residues 259–260 (DA) is cleaved from the precursor. Residue tryptophan 266 is modified to Tryptophan amide. Positions 269-270 (DA) are excised as a propeptide. Position 276 is a tryptophan amide (tryptophan 276). Positions 279–280 (DT) are excised as a propeptide. Tryptophan 286 carries the tryptophan amide modification. Residues 289 to 290 (DA) constitute a propeptide that is removed on maturation. Tryptophan 296 carries the tryptophan amide modification. Propeptides lie at residues 299–300 (DA) and 309–320 (DNNVIKSRSDDA). Tryptophan 326 is modified (tryptophan amide). The propeptide occupies 329 to 419 (QVEDGPTKIW…RRNNKKNNKF (91 aa)).

Belongs to the LWamide neuropeptide family. As to expression, in planula larvae, expressed in a narrow ring of ectodermal neurosensory cells around the widest circumference at the anterior of the larvae. In primary polyps, expression is confined to endodermal cells of the hypostome. In mature polyps, expression is strong in the epidermis from the tentacle level to the base of the polyp and weak in the gastrodermal cells in the apical hypostome.

The protein resides in the secreted. Its function is as follows. LWamide peptides may be involved in induction of metamorphosis. The protein is LWamide neuropeptides of Hydractinia echinata (Snail fur).